The chain runs to 151 residues: Secreted RxLR effector protein 30 (151 aa).

The first 19 residues, 1 to 19 (MRSSTILIVLGIAILAVNG), serve as a signal peptide directing secretion. Residues 38–53 (RLLRSTSTEHETDEER) carry the RxLR-dEER motif.

Belongs to the RxLR effector family.

The protein localises to the secreted. Its subcellular location is the host nucleus. Functionally, effector that acts as a broad suppressor of cell death to interrupt plant immunity. Inhibits cell death induced by cell death-inducing proteins, including the PAMP elicitor INF1 from P.infestans. This is Secreted RxLR effector protein 30 from Plasmopara viticola (Downy mildew of grapevine).